Here is a 98-residue protein sequence, read N- to C-terminus: Capsid assembly scaffolding protein (98 aa).

Positions V40–V62 form a coiled coil.

This sequence belongs to the phi29likevirus scaffolding protein family. In terms of assembly, homodimer. Interacts non-specifically with DNA; probably binds DNA in the early stages of DNA packaging.

Functionally, scaffolding protein involved in the icosahedric procapsid assembly. Coassembles with the capsid proteins to form the procapsid. The scaffolding protein is found within the capsid as a serie of concentric shells. During DNA packaging, the scaffolding protein molecules are released from the procapsid. The chain is Capsid assembly scaffolding protein (7) from Bacillus subtilis (Bacteriophage phi-29).